Consider the following 180-residue polypeptide: UPF0227 protein Shew_1627 (180 aa).

This sequence belongs to the UPF0227 family.

In Shewanella loihica (strain ATCC BAA-1088 / PV-4), this protein is UPF0227 protein Shew_1627.